The chain runs to 199 residues: VAMP-like protein YKT62 (199 aa).

Positions 7 to 131 (LVLKCDPETR…PYLKEASDKF (125 aa)) constitute a Longin domain. In terms of domain architecture, v-SNARE coiled-coil homology spans 139-199 (KLLKIQRELD…KKTNSCCTLL (61 aa)). Cys195 carries the S-palmitoyl cysteine lipid modification. At Cys196 the chain carries Cysteine methyl ester. Cys196 carries the S-geranylgeranyl cysteine lipid modification. Residues 197–199 (TLL) constitute a propeptide, removed in mature form.

It belongs to the synaptobrevin family. As to quaternary structure, interacts with SYP41. Core constituent of the SNARE complex required for membrane fusion at the trans-Golgi network.

It localises to the cell membrane. Involved in the secretory pathway. Essential for membrane fusion mediated by either SYP41 or SYP61; triggers the fusion of phospholipid vesicles containing SYP41 or SYP61 and VTI12. This Arabidopsis thaliana (Mouse-ear cress) protein is VAMP-like protein YKT62.